Reading from the N-terminus, the 187-residue chain is MPKPTKGPRLGGGPAHERLMLANLAQSLFEHKSIKTTETKAKRLRPVAERLVTFAKRGDLHARRRVMGIIPSKSVVHELFTEIAPLVAERDGGYTRITKLGFRKGDNAPMVQIELVLEPVTPKVRSSRTSTATAPAAAAPAAEAPAEESDVPVEETDAVEHTDETPAETTDEAAAEVEADAAEKSDK.

A disordered region spans residues 122–187 (PKVRSSRTST…EADAAEKSDK (66 aa)). Low complexity predominate over residues 127 to 144 (SRTSTATAPAAAAPAAEA). Composition is skewed to acidic residues over residues 145 to 157 (PAEE…EETD) and 165 to 180 (TPAE…VEAD).

The protein belongs to the bacterial ribosomal protein bL17 family. As to quaternary structure, part of the 50S ribosomal subunit. Contacts protein L32.

The sequence is that of Large ribosomal subunit protein bL17 from Clavibacter michiganensis subsp. michiganensis (strain NCPPB 382).